The chain runs to 123 residues: T-complex protein 1 subunit alpha (123 aa).

ADP is bound at residue Gly-68.

Belongs to the TCP-1 chaperonin family. Component of the chaperonin-containing T-complex (TRiC), a hexadecamer composed of two identical back-to-back stacked rings enclosing a protein folding chamber. Each ring is made up of eight different subunits: TCP1/CCT1, CCT2, CCT3, CCT4, CCT5, CCT6A/CCT6, CCT7, CCT8. Interacts with PACRG. Interacts with GBA1. Interacts with DLEC1.

The protein resides in the cytoplasm. It is found in the cytosol. It localises to the cytoskeleton. Its subcellular location is the microtubule organizing center. The protein localises to the centrosome. The catalysed reaction is ATP + H2O = ADP + phosphate + H(+). In terms of biological role, component of the chaperonin-containing T-complex (TRiC), a molecular chaperone complex that assists the folding of actin, tubulin and other proteins upon ATP hydrolysis. The TRiC complex mediates the folding of WRAP53/TCAB1, thereby regulating telomere maintenance. As part of the TRiC complex may play a role in the assembly of BBSome, a complex involved in ciliogenesis regulating transports vesicles to the cilia. This is T-complex protein 1 subunit alpha from Mesocricetus auratus (Golden hamster).